The sequence spans 664 residues: Exoribonuclease 2 (664 aa).

One can recognise an RNB domain in the interval 193–521; the sequence is RIDMTHIPFV…INHRMLKALI (329 aa). In terms of domain architecture, S1 motif spans 568 to 650; that stretch reads QTLFTGEIFD…ENRSLVAKPT (83 aa).

It belongs to the RNR ribonuclease family. RNase II subfamily.

It localises to the cytoplasm. It carries out the reaction Exonucleolytic cleavage in the 3'- to 5'-direction to yield nucleoside 5'-phosphates.. Functionally, involved in mRNA degradation. Hydrolyzes single-stranded polyribonucleotides processively in the 3' to 5' direction. The chain is Exoribonuclease 2 from Vibrio vulnificus (strain CMCP6).